The chain runs to 106 residues: ATP-dependent Clp protease adapter protein ClpS (106 aa).

Belongs to the ClpS family. Binds to the N-terminal domain of the chaperone ClpA.

Its function is as follows. Involved in the modulation of the specificity of the ClpAP-mediated ATP-dependent protein degradation. The chain is ATP-dependent Clp protease adapter protein ClpS from Salmonella arizonae (strain ATCC BAA-731 / CDC346-86 / RSK2980).